Reading from the N-terminus, the 47-residue chain is Defensin-like protein 1 (47 aa).

4 disulfide bridges follow: Cys5–Cys47, Cys16–Cys36, Cys22–Cys43, and Cys26–Cys45.

It belongs to the DEFL family.

In terms of biological role, fabatins have antibacterial activity against Gram-positive and Gram-negative bacteria. High activity against P.aeruginosa. No activity against S.cerevisiae and C.albicans. The polypeptide is Defensin-like protein 1 (Vicia faba (Broad bean)).